An 841-amino-acid polypeptide reads, in one-letter code: DNA mismatch repair protein MutS (841 aa).

An ATP-binding site is contributed by 600 to 607 (GPNMAGKS).

Belongs to the DNA mismatch repair MutS family.

This protein is involved in the repair of mismatches in DNA. It is possible that it carries out the mismatch recognition step. This protein has a weak ATPase activity. The polypeptide is DNA mismatch repair protein MutS (Carboxydothermus hydrogenoformans (strain ATCC BAA-161 / DSM 6008 / Z-2901)).